We begin with the raw amino-acid sequence, 228 residues long: Aquaporin Z (228 aa).

A run of 2 helical transmembrane segments spans residues 1 to 21 (MLNK…GGCG) and 23 to 43 (AILA…ALAF). The NPA 1 signature appears at 63–65 (NPA). Helical transmembrane passes span 82–102 (IPYW…LYVI), 129–149 (MMAG…IILG), and 154–174 (LAPA…IHLV). The NPA 2 signature appears at 184-186 (NPA). Residues 205 to 225 (LFWVAPLVGAVIGAIIWKGLL) traverse the membrane as a helical segment.

This sequence belongs to the MIP/aquaporin (TC 1.A.8) family. As to quaternary structure, homotetramer.

The protein localises to the cell inner membrane. The enzyme catalyses H2O(in) = H2O(out). In terms of biological role, channel that permits osmotically driven movement of water in both directions. It is involved in the osmoregulation and in the maintenance of cell turgor during volume expansion in rapidly growing cells. It mediates rapid entry or exit of water in response to abrupt changes in osmolarity. This is Aquaporin Z from Brucella abortus biovar 1 (strain 9-941).